The sequence spans 316 residues: MIQATLLISLSCLSFYTLGSGVRRYDPGQGVTIQYLSLAPDTFDDAYVGCSEEMEEKAVLLLEKEMANHTRLRESWETAQKAWEQKRAGLTLPPGFRSQHGIAIMVYTNSSNTLYRELNQAVRTGGGSWESYMKHFPFKALHFYLTRALQLLRGGGGCSREPRQEVFRGVRRIHFVPKSVGDSIRLGQFASSSLDEAVACGFGSATFFSLRTCSGAPIQALSVFPEEREVLIPPYEVFVVSNFSKDGNKSLMTLSSSDQMCSHFNCAYLGEKKRPSCEFVPIGGQGDSLSKGAFSLLSWKTLLLASWGFQLLGAGL.

The first 23 residues, 1-23, serve as a signal peptide directing secretion; it reads MIQATLLISLSCLSFYTLGSGVR. A disulfide bridge links Cys50 with Cys266. An N-linked (GlcNAc...) asparagine glycan is attached at Asn68. Residues 70-261 form the TR mART core domain; it reads TRLRESWETA…MTLSSSDQMC (192 aa). Tyr107 is a binding site for NAD(+). Asn109 carries an N-linked (GlcNAc...) asparagine glycan. 2 residues coordinate NAD(+): Arg168 and Gln188. Arg168 is a catalytic residue. The active site involves Ser191. Ser222 provides a ligand contact to NAD(+). Glu229 is a catalytic residue. N-linked (GlcNAc...) asparagine glycans are attached at residues Asn242 and Asn248.

Belongs to the Arg-specific ADP-ribosyltransferase family.

It localises to the secreted. It is found in the membrane. It carries out the reaction L-arginyl-[protein] + NAD(+) = N(omega)-(ADP-D-ribosyl)-L-arginyl-[protein] + nicotinamide + H(+). The protein is Ecto-ADP-ribosyltransferase 5 (ART5) of Bos taurus (Bovine).